Here is a 405-residue protein sequence, read N- to C-terminus: Cytochrome b (405 aa).

Residues Phe44 to Met64 traverse the membrane as a helical segment. The heme b site is built by His94 and His108. The next 8 helical transmembrane spans lie at Gly97–Ser117, Val124–Tyr144, Phe163–Val183, Phe191–Trp211, Phe245–Phe265, Leu303–Asp323, Gly338–Ala358, and Leu368–Glu388. Heme b contacts are provided by His195 and His209.

It belongs to the cytochrome b family. As to quaternary structure, the main subunits of complex b-c1 are: cytochrome b, cytochrome c1 and the Rieske protein. It depends on heme b as a cofactor.

Its subcellular location is the cell membrane. In terms of biological role, component of the ubiquinol-cytochrome c reductase complex (complex III or cytochrome b-c1 complex), which is a respiratory chain that generates an electrochemical potential coupled to ATP synthesis. The polypeptide is Cytochrome b (petB) (Rhodospirillum rubrum).